A 90-amino-acid chain; its full sequence is UPF0386 protein Rru_A2144 (90 aa).

The protein belongs to the UPF0386 family.

This is UPF0386 protein Rru_A2144 from Rhodospirillum rubrum (strain ATCC 11170 / ATH 1.1.1 / DSM 467 / LMG 4362 / NCIMB 8255 / S1).